A 559-amino-acid polypeptide reads, in one-letter code: Membrane protein insertase YidC (559 aa).

The helical transmembrane segment at 6 to 26 (TVLWMIFSFSLLLLWNNWQIH) threads the bilayer. Positions 34–80 (GGPSPEQNAPATANNQAATNPASNTPAVPNAPAATSAPSSVPGSTAP) are disordered. Residues 42-80 (APATANNQAATNPASNTPAVPNAPAATSAPSSVPGSTAP) are compositionally biased toward low complexity. Transmembrane regions (helical) follow at residues 367–387 (LLGN…AVFY), 441–461 (LPMV…LASV), 480–500 (PYFI…KLNP), and 510–530 (VMMV…AGLV).

The protein belongs to the OXA1/ALB3/YidC family. Type 1 subfamily. In terms of assembly, interacts with the Sec translocase complex via SecD. Specifically interacts with transmembrane segments of nascent integral membrane proteins during membrane integration.

It is found in the cell inner membrane. In terms of biological role, required for the insertion and/or proper folding and/or complex formation of integral membrane proteins into the membrane. Involved in integration of membrane proteins that insert both dependently and independently of the Sec translocase complex, as well as at least some lipoproteins. Aids folding of multispanning membrane proteins. This Bordetella avium (strain 197N) protein is Membrane protein insertase YidC.